The primary structure comprises 166 residues: Crossover junction endodeoxyribonuclease RuvC (166 aa).

Residues Asp7, Glu68, and Asp141 contribute to the active site. 3 residues coordinate Mg(2+): Asp7, Glu68, and Asp141.

It belongs to the RuvC family. As to quaternary structure, homodimer which binds Holliday junction (HJ) DNA. The HJ becomes 2-fold symmetrical on binding to RuvC with unstacked arms; it has a different conformation from HJ DNA in complex with RuvA. In the full resolvosome a probable DNA-RuvA(4)-RuvB(12)-RuvC(2) complex forms which resolves the HJ. The cofactor is Mg(2+).

The protein resides in the cytoplasm. It catalyses the reaction Endonucleolytic cleavage at a junction such as a reciprocal single-stranded crossover between two homologous DNA duplexes (Holliday junction).. In terms of biological role, the RuvA-RuvB-RuvC complex processes Holliday junction (HJ) DNA during genetic recombination and DNA repair. Endonuclease that resolves HJ intermediates. Cleaves cruciform DNA by making single-stranded nicks across the HJ at symmetrical positions within the homologous arms, yielding a 5'-phosphate and a 3'-hydroxyl group; requires a central core of homology in the junction. The consensus cleavage sequence is 5'-(A/T)TT(C/G)-3'. Cleavage occurs on the 3'-side of the TT dinucleotide at the point of strand exchange. HJ branch migration catalyzed by RuvA-RuvB allows RuvC to scan DNA until it finds its consensus sequence, where it cleaves and resolves the cruciform DNA. The sequence is that of Crossover junction endodeoxyribonuclease RuvC from Caldicellulosiruptor saccharolyticus (strain ATCC 43494 / DSM 8903 / Tp8T 6331).